A 385-amino-acid chain; its full sequence is Probable dual-specificity RNA methyltransferase RlmN (385 aa).

The interval 1 to 35 (MNVKEPAEEAAIQLRTERQRIEPEGEEQSEQPTDL) is disordered. Glu-121 serves as the catalytic Proton acceptor. Positions 132–367 (TRDRVTVCLS…AVIREERGQD (236 aa)) constitute a Radical SAM core domain. The cysteines at positions 139 and 372 are disulfide-linked. Cys-146, Cys-150, and Cys-153 together coordinate [4Fe-4S] cluster. S-adenosyl-L-methionine-binding positions include 198–199 (GE), Ser-230, 253–255 (SLH), and Asn-329. Cys-372 acts as the S-methylcysteine intermediate in catalysis.

The protein belongs to the radical SAM superfamily. RlmN family. The cofactor is [4Fe-4S] cluster.

It localises to the cytoplasm. The enzyme catalyses adenosine(2503) in 23S rRNA + 2 reduced [2Fe-2S]-[ferredoxin] + 2 S-adenosyl-L-methionine = 2-methyladenosine(2503) in 23S rRNA + 5'-deoxyadenosine + L-methionine + 2 oxidized [2Fe-2S]-[ferredoxin] + S-adenosyl-L-homocysteine. It catalyses the reaction adenosine(37) in tRNA + 2 reduced [2Fe-2S]-[ferredoxin] + 2 S-adenosyl-L-methionine = 2-methyladenosine(37) in tRNA + 5'-deoxyadenosine + L-methionine + 2 oxidized [2Fe-2S]-[ferredoxin] + S-adenosyl-L-homocysteine. Functionally, specifically methylates position 2 of adenine 2503 in 23S rRNA and position 2 of adenine 37 in tRNAs. The protein is Probable dual-specificity RNA methyltransferase RlmN of Heliobacterium modesticaldum (strain ATCC 51547 / Ice1).